Here is a 1205-residue protein sequence, read N- to C-terminus: ATP-dependent DNA helicase MER3 homolog (1205 aa).

One can recognise a Helicase ATP-binding domain in the interval 41–236 (PACFLSDVNM…WLAVPSEGIK (196 aa)). Residue 54-61 (APTGSGKT) participates in ATP binding. The DEAH box motif lies at 172–175 (DEVH). A Helicase C-terminal domain is found at 266-467 (RLQSFIFDIL…CAVEHLNAEI (202 aa)). The SEC63 domain maps to 541–852 (PLEPGRLMTK…FEEYVGLDIH (312 aa)). A compositionally biased stretch (polar residues) spans 1075 to 1091 (QKSEILNRTQGKNSTQL). The disordered stretch occupies residues 1075 to 1131 (QKSEILNRTQGKNSTQLAGKKAFEKSKTPDENSLHFVGKRDSSSEKSKALSKTPDEN). A compositionally biased stretch (basic and acidic residues) spans 1095–1122 (KAFEKSKTPDENSLHFVGKRDSSSEKSK).

This sequence belongs to the helicase family. SKI2 subfamily. As to expression, transcribed preferentially in early stages of meiocyte development and during meiosis in young flowers.

It localises to the nucleus. Its subcellular location is the chromosome. It carries out the reaction Couples ATP hydrolysis with the unwinding of duplex DNA by translocating in the 3'-5' direction.. The enzyme catalyses ATP + H2O = ADP + phosphate + H(+). In terms of biological role, DNA helicase required for crossover formation, complete synapsis of homologous chromosomes and bivalent formation during meiosis. Is specific to recombination events resulting in interference-sensitive crossovers (class I meiotic crossover). Works cooperatively with ZIP4 to promote crossovers. This Oryza sativa subsp. japonica (Rice) protein is ATP-dependent DNA helicase MER3 homolog.